The chain runs to 251 residues: SRR1-like protein (251 aa).

The protein belongs to the SRR1 family.

The protein resides in the cytoplasm. The protein localises to the nucleus. The sequence is that of SRR1-like protein from Schizosaccharomyces pombe (strain 972 / ATCC 24843) (Fission yeast).